A 163-amino-acid chain; its full sequence is Seed allergenic protein RAG1 (163 aa).

Residues Met-1–Ala-27 form the signal peptide. Cystine bridges form between Cys-39-Cys-90, Cys-53-Cys-78, Cys-61-Cys-122, Cys-79-Cys-138, and Cys-92-Cys-150.

Belongs to the cereal trypsin/alpha-amylase inhibitor family. In terms of processing, five disulfide bonds are present.

It localises to the secreted. In terms of biological role, seed storage protein. The chain is Seed allergenic protein RAG1 (RAG1) from Oryza sativa subsp. japonica (Rice).